We begin with the raw amino-acid sequence, 137 residues long: Small ribosomal subunit protein bS16m (137 aa).

A mitochondrion-targeting transit peptide spans 1–34 (MVHLTTLLCKAYRGGHLTIRLALGGCTNRPFYRI). Thr-130 bears the Phosphothreonine mark.

The protein belongs to the bacterial ribosomal protein bS16 family. As to quaternary structure, component of the mitochondrial ribosome small subunit (28S) which comprises a 12S rRNA and about 30 distinct proteins.

The protein localises to the mitochondrion. This is Small ribosomal subunit protein bS16m (MRPS16) from Pongo abelii (Sumatran orangutan).